The primary structure comprises 245 residues: Octanoyltransferase (245 aa).

The 189-residue stretch at 54 to 242 (KTAHEQVWLL…AFEKIFGPTI (189 aa)) folds into the BPL/LPL catalytic domain. Residues 93 to 100 (RGGEFTYH), 173 to 175 (AIG), and 186 to 188 (GVS) each bind substrate. The active-site Acyl-thioester intermediate is the Cys-204.

The protein belongs to the LipB family.

It localises to the cytoplasm. The enzyme catalyses octanoyl-[ACP] + L-lysyl-[protein] = N(6)-octanoyl-L-lysyl-[protein] + holo-[ACP] + H(+). It functions in the pathway protein modification; protein lipoylation via endogenous pathway; protein N(6)-(lipoyl)lysine from octanoyl-[acyl-carrier-protein]: step 1/2. In terms of biological role, catalyzes the transfer of endogenously produced octanoic acid from octanoyl-acyl-carrier-protein onto the lipoyl domains of lipoate-dependent enzymes. Lipoyl-ACP can also act as a substrate although octanoyl-ACP is likely to be the physiological substrate. The sequence is that of Octanoyltransferase from Bartonella tribocorum (strain CIP 105476 / IBS 506).